We begin with the raw amino-acid sequence, 245 residues long: Probable GTP-binding protein EngB (245 aa).

The EngB-type G domain occupies 46–223 (DVPEIAFVGR…AQHLWDWAHP (178 aa)). Residues 54-61 (GRSNAGKS), 81-85 (GRTQS), 103-106 (DLPG), 173-176 (TKSD), and 202-204 (FSS) each bind GTP. The Mg(2+) site is built by Ser-61 and Thr-83. Residues 219–245 (DWAHPPEKPAKKPKAEPAAEAATGDEG) form a disordered region. Over residues 222 to 235 (HPPEKPAKKPKAEP) the composition is skewed to basic and acidic residues. Residues 236–245 (AAEAATGDEG) are compositionally biased toward low complexity.

Belongs to the TRAFAC class TrmE-Era-EngA-EngB-Septin-like GTPase superfamily. EngB GTPase family. Mg(2+) is required as a cofactor.

In terms of biological role, necessary for normal cell division and for the maintenance of normal septation. This chain is Probable GTP-binding protein EngB, found in Polaromonas sp. (strain JS666 / ATCC BAA-500).